The following is a 411-amino-acid chain: Peptidase T (411 aa).

Residue His-78 participates in Zn(2+) binding. Asp-80 is an active-site residue. Asp-140 is a binding site for Zn(2+). Glu-173 serves as the catalytic Proton acceptor. The Zn(2+) site is built by Glu-174, Asp-196, and His-379.

Belongs to the peptidase M20B family. Requires Zn(2+) as cofactor.

It is found in the cytoplasm. The catalysed reaction is Release of the N-terminal residue from a tripeptide.. Functionally, cleaves the N-terminal amino acid of tripeptides. The sequence is that of Peptidase T from Yersinia pestis bv. Antiqua (strain Antiqua).